Here is a 198-residue protein sequence, read N- to C-terminus: Nucleoplasmin (198 aa).

The acidic tract A1 stretch occupies residues 35–38 (SDED). Acidic residues predominate over residues 125 to 145 (SWAEEEGEEEVEEEEEEEDPE). The disordered stretch occupies residues 125–198 (SWAEEEGEEE…GRGRKPAAKK (74 aa)). The acidic tract A2 stretch occupies residues 128 to 145 (EEEGEEEVEEEEEEEDPE). Positions 150–167 (AVKRPAASKKGSQAKKKK) are enriched in basic residues. The Bipartite nuclear localization signal signature appears at 152–167 (KRPAASKKGSQAKKKK). Positions 172-174 (EEE) are acidic tract A3. The span at 183–198 (KKGKGAGRGRKPAAKK) shows a compositional bias: basic residues.

The protein belongs to the nucleoplasmin family. In terms of assembly, homopentamer. Expressed in oocytes.

It localises to the nucleus. Functionally, acts as a chaperone for histones, such as histone H2A-H2B, and thus regulates the assembly of nucleosome cores. Involved in chromatin remodeling, especially during fertilization and early embryonic development. May be involved in sperm chromatin decondensation during fertilization. In Rhinella marina (Cane toad), this protein is Nucleoplasmin.